The primary structure comprises 341 residues: Phenylalanine--tRNA ligase alpha subunit (341 aa).

Residue Glu-256 participates in Mg(2+) binding.

It belongs to the class-II aminoacyl-tRNA synthetase family. Phe-tRNA synthetase alpha subunit type 1 subfamily. Tetramer of two alpha and two beta subunits. Mg(2+) serves as cofactor.

It is found in the cytoplasm. The catalysed reaction is tRNA(Phe) + L-phenylalanine + ATP = L-phenylalanyl-tRNA(Phe) + AMP + diphosphate + H(+). This Chlamydia felis (strain Fe/C-56) (Chlamydophila felis) protein is Phenylalanine--tRNA ligase alpha subunit.